Here is a 258-residue protein sequence, read N- to C-terminus: Phosphate import ATP-binding protein PstB (258 aa).

The 243-residue stretch at 5–247 (IDVSGLTAYY…SQIFSNPKEK (243 aa)) folds into the ABC transporter domain. Position 37 to 44 (37 to 44 (GPSGCGKS)) interacts with ATP.

The protein belongs to the ABC transporter superfamily. Phosphate importer (TC 3.A.1.7) family. The complex is composed of two ATP-binding proteins (PstB), two transmembrane proteins (PstC and PstA) and a solute-binding protein (PstS).

It localises to the cell membrane. The catalysed reaction is phosphate(out) + ATP + H2O = ADP + 2 phosphate(in) + H(+). In terms of biological role, part of the ABC transporter complex PstSACB involved in phosphate import. Responsible for energy coupling to the transport system. The sequence is that of Phosphate import ATP-binding protein PstB from Frankia casuarinae (strain DSM 45818 / CECT 9043 / HFP020203 / CcI3).